A 1452-amino-acid polypeptide reads, in one-letter code: Protein clueless (1452 aa).

Disordered stretches follow at residues 1-93 and 266-288; these read MALE…SNGH and KKTR…VSEP. A compositionally biased stretch (low complexity) spans 8 to 24; it reads KNSNATATSDATATKAS. Positions 42 to 59 are enriched in polar residues; sequence PIPNSNHQNSNQNLVNGN. The span at 68–77 shows a compositional bias: basic residues; the sequence is AKKKGKKNRN. A Phosphoserine modification is found at Ser272. One can recognise a Clu domain in the interval 426–668; that stretch reads RAEDAFSSKL…RTFPPDVNFL (243 aa). Disordered regions lie at residues 726–775, 962–1013, and 1414–1452; these read KQSE…GDTK, AVSS…SSVS, and ANNN…ATSS. Residues 750–766 are compositionally biased toward basic and acidic residues; that stretch reads GADKTDVKEEKNEENEK. Residues 970-985 show a composition bias toward basic residues; the sequence is KKRGNGGKHNKHKSSK. Low complexity predominate over residues 990–1013; the sequence is QQQQQATGNQNGSSSGSSNGSSVS. Over residues 1423–1433 the composition is skewed to basic and acidic residues; sequence AVPKDVEEQKE.

Belongs to the CLU family.

The protein localises to the cytoplasm. In terms of biological role, mRNA-binding protein involved in proper cytoplasmic distribution of mitochondria. The chain is Protein clueless from Drosophila erecta (Fruit fly).